The primary structure comprises 427 residues: Glutamate-1-semialdehyde 2,1-aminomutase (427 aa).

At lysine 267 the chain carries N6-(pyridoxal phosphate)lysine.

The protein belongs to the class-III pyridoxal-phosphate-dependent aminotransferase family. HemL subfamily. In terms of assembly, homodimer. It depends on pyridoxal 5'-phosphate as a cofactor.

The protein resides in the cytoplasm. It carries out the reaction (S)-4-amino-5-oxopentanoate = 5-aminolevulinate. Its pathway is porphyrin-containing compound metabolism; protoporphyrin-IX biosynthesis; 5-aminolevulinate from L-glutamyl-tRNA(Glu): step 2/2. The sequence is that of Glutamate-1-semialdehyde 2,1-aminomutase from Geobacter sulfurreducens (strain ATCC 51573 / DSM 12127 / PCA).